The following is an 841-amino-acid chain: Translation initiation factor IF-2 (841 aa).

5 stretches are compositionally biased toward basic and acidic residues: residues 1-12 (MSDNEIKNEAPK), 52-92 (ALKA…EATK), 114-170 (EQPK…REEA), 188-202 (READRDNDRRSEANR), and 213-235 (KKGDREDKNERNADRRNQKDVKG). Disordered regions lie at residues 1–24 (MSDNEIKNEAPKKLSLQRRTKTTV) and 52–246 (ALKA…GSAL). A tr-type G domain is found at 340 to 510 (TRAPVVTIMG…LLQSEVLELT (171 aa)). The tract at residues 349–356 (GHVDHGKT) is G1. Position 349–356 (349–356 (GHVDHGKT)) interacts with GTP. Residues 374 to 378 (GITQH) are G2. Positions 396–399 (DTPG) are G3. GTP contacts are provided by residues 396-400 (DTPGH) and 450-453 (NKID). Residues 450-453 (NKID) form a G4 region. The tract at residues 486 to 488 (SAK) is G5.

It belongs to the TRAFAC class translation factor GTPase superfamily. Classic translation factor GTPase family. IF-2 subfamily.

It localises to the cytoplasm. One of the essential components for the initiation of protein synthesis. Protects formylmethionyl-tRNA from spontaneous hydrolysis and promotes its binding to the 30S ribosomal subunits. Also involved in the hydrolysis of GTP during the formation of the 70S ribosomal complex. This chain is Translation initiation factor IF-2, found in Actinobacillus pleuropneumoniae serotype 5b (strain L20).